We begin with the raw amino-acid sequence, 149 residues long: Ribonuclease H (149 aa).

Residues M1–D145 enclose the RNase H type-1 domain. 4 residues coordinate Mg(2+): D9, E50, D72, and D137.

It belongs to the RNase H family. Monomer. Mg(2+) is required as a cofactor.

It is found in the cytoplasm. The enzyme catalyses Endonucleolytic cleavage to 5'-phosphomonoester.. Endonuclease that specifically degrades the RNA of RNA-DNA hybrids. This chain is Ribonuclease H, found in Clostridium botulinum (strain ATCC 19397 / Type A).